Here is a 340-residue protein sequence, read N- to C-terminus: MKSFLSSCTTGGCGAKIGPGELSKVLSGLPVFQDPQLLVGFDASDDAAVYQINEDTAIVSTVDFFTPMVEDPRIFGRIAAANALSDVYAMGGSPLFALNLVCYPEREDIQDLGEILAGGAEKLQEAGAVLCGGHSIYDREPKYGLAVTGRLNPRQIWKNNTPQPGDRLILTKPLGVGIVMAALRGEMAEAAAVEAALASMQRLNKYAAEKARDFPIHACTDITGFGLLAHTREMAGGSTTIVLYPSALPYIAQAYTYAQGYLLTAAGQRNRNFMEGAVEFGDTPFPLQELMLDPQTSGGLLLSVPGDCAQEALRAIQEAEPQAALIGEVVSRQALPILLR.

Cys13 is a catalytic residue. ATP contacts are provided by residues Lys16 and 43-45; that span reads ASD. Asp46 contacts Mg(2+). ATP-binding positions include Asp63, Asp86, and 133-135; that span reads GHS. Residue Asp86 participates in Mg(2+) binding. Asp221 provides a ligand contact to Mg(2+).

Belongs to the selenophosphate synthase 1 family. Class I subfamily. In terms of assembly, homodimer. It depends on Mg(2+) as a cofactor.

It carries out the reaction hydrogenselenide + ATP + H2O = selenophosphate + AMP + phosphate + 2 H(+). Its function is as follows. Synthesizes selenophosphate from selenide and ATP. This Desulfitobacterium hafniense (strain Y51) protein is Selenide, water dikinase.